We begin with the raw amino-acid sequence, 206 residues long: Ras-related protein Ral-A (206 aa).

21 to 28 contributes to the GTP binding site; sequence GSGGVGKS. Residues 43–51 carry the Effector region motif; it reads YEPTKADSY. GTP contacts are provided by residues 68 to 72 and 127 to 130; these read DTAGQ and NKSD. Residue S194 is modified to Phosphoserine. Position 203 is a cysteine methyl ester (C203). C203 is lipidated: S-geranylgeranyl cysteine. Positions 204-206 are cleaved as a propeptide — removed in mature form; sequence CIL.

It belongs to the small GTPase superfamily. Ras family. As to quaternary structure, interacts (via effector domain) with RALBP1; during mitosis, recruits RALBP1 to the mitochondrion where it promotes DNM1L phosphorylation and mitochondrial fission. Interacts with EXOC2/Sec5 and EXOC8/Exo84; binding to EXOC2 and EXOC8 is mutually exclusive. Interacts with Clostridium exoenzyme C3. Interacts with RALGPS1. Interacts with LPAR1 and LPAR2. Interacts with GRK2 in response to LPAR1 activation. RALA and GRK2 binding to LPAR1 is mutually exclusive. Interacts with CDC42. Post-translationally, prenylation is essential for membrane localization. In terms of processing, phosphorylated. Phosphorylation at Ser-194 by AURKA/Aurora kinase A, during mitosis, induces RALA localization to the mitochondrion where it regulates mitochondrial fission.

The protein localises to the cell membrane. It is found in the cleavage furrow. Its subcellular location is the midbody. It localises to the midbody ring. The protein resides in the mitochondrion. The catalysed reaction is GTP + H2O = GDP + phosphate + H(+). Its activity is regulated as follows. Alternates between an inactive form bound to GDP and an active form bound to GTP. Activated by a guanine nucleotide-exchange factor (GEF) and inactivated by a GTPase-activating protein (GAP). Functionally, multifunctional GTPase involved in a variety of cellular processes including gene expression, cell migration, cell proliferation, oncogenic transformation and membrane trafficking. Accomplishes its multiple functions by interacting with distinct downstream effectors. Acts as a GTP sensor for GTP-dependent exocytosis of dense core vesicles. Key regulator of LPAR1 signaling and competes with GRK2 for binding to LPAR1 thus affecting the signaling properties of the receptor. Required for anchorage-independent proliferation of transformed cells. The RALA-exocyst complex regulates integrin-dependent membrane raft exocytosis and growth signaling. During mitosis, supports the stabilization and elongation of the intracellular bridge between dividing cells. Cooperates with EXOC2 to recruit other components of the exocyst to the early midbody. During mitosis, also controls mitochondrial fission by recruiting to the mitochondrion RALBP1, which mediates the phosphorylation and activation of DNM1L by the mitotic kinase cyclin B-CDK1. The chain is Ras-related protein Ral-A (Rala) from Mus musculus (Mouse).